The primary structure comprises 339 residues: 3-isopropylmalate dehydrogenase (339 aa).

Arg-87, Arg-97, Arg-124, and Asp-214 together coordinate substrate. Residues Asp-214, Asp-238, and Asp-242 each coordinate Mg(2+). 274-286 (GSAPDIAGQGIAD) contacts NAD(+).

Belongs to the isocitrate and isopropylmalate dehydrogenases family. LeuB type 2 subfamily. In terms of assembly, homodimer. Requires Mg(2+) as cofactor. It depends on Mn(2+) as a cofactor.

It is found in the cytoplasm. The catalysed reaction is (2R,3S)-3-isopropylmalate + NAD(+) = 4-methyl-2-oxopentanoate + CO2 + NADH. Its pathway is amino-acid biosynthesis; L-leucine biosynthesis; L-leucine from 3-methyl-2-oxobutanoate: step 3/4. Its function is as follows. Catalyzes the oxidation of 3-carboxy-2-hydroxy-4-methylpentanoate (3-isopropylmalate) to 3-carboxy-4-methyl-2-oxopentanoate. The product decarboxylates to 4-methyl-2 oxopentanoate. The polypeptide is 3-isopropylmalate dehydrogenase (Mycobacterium ulcerans (strain Agy99)).